The primary structure comprises 399 residues: uncharacterized protein (399 aa).

10 consecutive transmembrane segments (helical) span residues 6 to 26, 27 to 47, 60 to 80, 111 to 131, 147 to 167, 173 to 193, 195 to 215, 220 to 240, 328 to 348, and 362 to 382; these read HLTF…LIIP, KGYN…FIPL, LIFS…INKD, ILYA…FQKF, MGNI…HFFI, STLF…LSGA, GGWI…KEFI, IITL…SPKF, GLVG…YFIK, and ILGI…SFLA.

It localises to the cell membrane. This is an uncharacterized protein from Haemophilus influenzae (strain ATCC 51907 / DSM 11121 / KW20 / Rd).